The primary structure comprises 783 residues: Coiled-coil domain-containing protein 30 (783 aa).

The span at 1 to 22 (MSQEKNEMFESEWSKEREREKQ) shows a compositional bias: basic and acidic residues. Disordered stretches follow at residues 1-26 (MSQEKNEMFESEWSKEREREKQLASG), 101-191 (LGGK…LTMK), and 209-231 (LLQSQSSGDSSDDSGAQHPSSGE). A coiled-coil region spans residues 22–98 (QLASGLDTAE…LSQEFAQLNH (77 aa)). A compositionally biased stretch (polar residues) spans 106-115 (APSNLITSEN). Positions 131–191 (IQSRKEETEE…EEKEQQLTMK (61 aa)) are enriched in basic and acidic residues. 2 coiled-coil regions span residues 165-497 (REGQ…LNVH) and 527-622 (DKRI…RIIR). The interval 731 to 755 (EEIKSKEAMASSKSPEKSPENLVCS) is disordered.

It belongs to the prefoldin subunit beta family. In terms of tissue distribution, expressed in brain, kidney, pancreas, placenta, liver, thymus and prostate.

The sequence is that of Coiled-coil domain-containing protein 30 (CCDC30) from Homo sapiens (Human).